A 963-amino-acid polypeptide reads, in one-letter code: Importin-13 (963 aa).

HEAT repeat units lie at residues 24-54, 56-88, 95-135, 142-179, 194-231, 236-268, 276-325, 330-372, 375-438, 440-476, 487-522, 524-558, 562-600, 603-648, 676-716, 720-754, 761-803, 815-845, 860-893, and 897-931; these read ESVEKALHQLYYDPNIENKNLAQKWLMQAQV, PQAWHFSWQLLQPDKVPEIQYFGASALPIKTSR, TDQY…LSMM, AVADMVRLFQAEDSPVDGQGRCLALLELLTVLPEEFQT, LAVECGAVFPLLEQLLQQPSSPSCVRQKVLKCFSSWVQ, LQDCEALIQAAFAALQDSELFDSSVEAIVNAIS, VNTL…ALLD, WQSF…DDIL, EAEK…YEML, AELLSNLYDKLGRLLTSSEEPYSWQHTEALLYGFQSI, VVPGLIGLIPRISISNVQLADTVMFTIGALSEWLAD, PVMINSVLPLVLHALGNPEPSVSSVSTLKKICREC, LPPYAANIVAVSQDVLMKQIHKTSQCMWLMQALGFLLSA, VEEI…SNLF, PVVV…VKTL, FAPMVPQLCEMLGRMYSTIPQASALDLTRQLVHIF, FPPI…ALKR, VKAVFQCAVLALKFPEAPTVKASCGFFTELL, EDGRMLLIAVLEAIGGQASRSLMDCFADILFALN, and FSLLSMWIKEALQPPGFPSARLSPEQKDTFSQQIL. Residues 45–111 enclose the Importin N-terminal domain; sequence AQKWLMQAQV…KAQLFTQITR (67 aa).

It belongs to the importin beta family. Interacts with UBC9, RAN, RBM8A, eIF-1A and PAX6.

The protein localises to the cytoplasm. It is found in the nucleus. Its function is as follows. Functions in nuclear protein import as nuclear transport receptor. Serves as receptor for nuclear localization signals (NLS) in cargo substrates. Is thought to mediate docking of the importin/substrate complex to the nuclear pore complex (NPC) through binding to nucleoporin and the complex is subsequently translocated through the pore by an energy requiring, Ran-dependent mechanism. At the nucleoplasmic side of the NPC, Ran binds to the importin, the importin/substrate complex dissociates and importin is re-exported from the nucleus to the cytoplasm where GTP hydrolysis releases Ran. The directionality of nuclear import is thought to be conferred by an asymmetric distribution of the GTP- and GDP-bound forms of Ran between the cytoplasm and nucleus. Mediates the nuclear import of UBC9, the RBM8A/MAGOH complex, PAX6 and probably other members of the paired homeobox family. Also mediates nuclear export of eIF-1A, and the cytoplasmic release of eIF-1A is triggered by the loading of import substrates onto IPO13. The sequence is that of Importin-13 (IPO13) from Pongo abelii (Sumatran orangutan).